The following is a 361-amino-acid chain: Protein YIM1-2 (361 aa).

Belongs to the YIM1 family.

It localises to the lipid droplet. The protein resides in the mitochondrion. In Lachancea thermotolerans (strain ATCC 56472 / CBS 6340 / NRRL Y-8284) (Yeast), this protein is Protein YIM1-2 (YIM1-2).